A 167-amino-acid polypeptide reads, in one-letter code: uncharacterized protein (167 aa).

The protein localises to the plastid. Its subcellular location is the chloroplast. This is an uncharacterized protein from Mesostigma viride (Green alga).